The following is a 501-amino-acid chain: Trans-cinnamate 4-monooxygenase (501 aa).

The chain crosses the membrane as a helical span at residues 3–23; the sequence is LVLLEKALLGLFAAAVLAVAV. (E)-cinnamate contacts are provided by residues 213–218 and A302; that span reads RSRLSQ. C443 provides a ligand contact to heme.

Belongs to the cytochrome P450 family. It depends on heme as a cofactor.

The protein localises to the membrane. The enzyme catalyses (E)-cinnamate + reduced [NADPH--hemoprotein reductase] + O2 = (E)-4-coumarate + oxidized [NADPH--hemoprotein reductase] + H2O + H(+). Its pathway is phenylpropanoid metabolism; trans-4-coumarate biosynthesis; trans-4-coumarate from trans-cinnamate: step 1/1. Catalyzes the first oxidative step of the phenylpropanoid pathway in higher plants by transforming trans-cinnamate into p-coumarate. The compounds formed by this pathway are essential components for lignification, pollination, and defense against ultraviolet light, predators and pathogens. Can also use 2-naphthoic acid as substrate. This chain is Trans-cinnamate 4-monooxygenase, found in Sorghum bicolor (Sorghum).